Consider the following 480-residue polypeptide: PTS system sucrose-specific EIIBC component (480 aa).

The PTS EIIB type-1 domain occupies 4–87 (KKSAENILQA…EKITGKEASS (84 aa)). Cys26 functions as the Phosphocysteine intermediate; for EIIB activity in the catalytic mechanism. 8 helical membrane passes run 109–129 (LSDI…LMGI), 158–178 (MINI…GFSA), 182–202 (FGGN…PELM), 264–284 (LLTP…FVGP), 303–323 (FGGA…VITG), 349–369 (PIAT…FFII), 405–425 (PFIG…FFKV), and 449–469 (LHYG…TYAL). One can recognise a PTS EIIC type-1 domain in the interval 120–480 (IVAGGLLMGI…YRKKYRNIEA (361 aa)).

It is found in the cell membrane. It carries out the reaction N(pros)-phospho-L-histidyl-[protein](out) + sucrose = sucrose 6(G)-phosphate(in) + L-histidyl-[protein]. Its function is as follows. The phosphoenolpyruvate-dependent sugar phosphotransferase system (sugar PTS), a major carbohydrate active transport system, catalyzes the phosphorylation of incoming sugar substrates concomitantly with their translocation across the cell membrane. This system is involved in sucrose transport. In Staphylococcus xylosus, this protein is PTS system sucrose-specific EIIBC component.